Consider the following 159-residue polypeptide: MNINIVTIGKLKEKYLKQGIEEYTKRLSAYAKIDIIELPDEKAPENLSDQDMKIIKDKEGDRILSKISPDAHVIALAIEGKMKTSEELADTIDKLATYGKSKVTFVIGGSLGLSDTVMKRADEKLSFSKMTFPHQLMRLILVEQIYRAFRINRGEPYHK.

S-adenosyl-L-methionine contacts are provided by residues Leu-76, Gly-108, and 127–132 (FSKMTF).

This sequence belongs to the RNA methyltransferase RlmH family. As to quaternary structure, homodimer.

The protein resides in the cytoplasm. The catalysed reaction is pseudouridine(1915) in 23S rRNA + S-adenosyl-L-methionine = N(3)-methylpseudouridine(1915) in 23S rRNA + S-adenosyl-L-homocysteine + H(+). Specifically methylates the pseudouridine at position 1915 (m3Psi1915) in 23S rRNA. This Bacillus subtilis (strain 168) protein is Ribosomal RNA large subunit methyltransferase H.